A 122-amino-acid chain; its full sequence is Fluoride-specific ion channel FluC (122 aa).

The next 4 membrane-spanning stretches (helical) occupy residues 5 to 25 (FLIG…SGII), 29 to 49 (FGIP…VGFL), 65 to 85 (FIIT…YESF), and 93 to 113 (FIKS…MIYF). Positions 72 and 75 each coordinate Na(+).

The protein belongs to the fluoride channel Fluc/FEX (TC 1.A.43) family.

It localises to the cell membrane. It carries out the reaction fluoride(in) = fluoride(out). Na(+) is not transported, but it plays an essential structural role and its presence is essential for fluoride channel function. In terms of biological role, fluoride-specific ion channel. Important for reducing fluoride concentration in the cell, thus reducing its toxicity. The sequence is that of Fluoride-specific ion channel FluC from Methanococcus vannielii (strain ATCC 35089 / DSM 1224 / JCM 13029 / OCM 148 / SB).